The sequence spans 360 residues: Protein Wnt-2 (360 aa).

A signal peptide spans 1 to 25; that stretch reads MNAPVGGIWLWLPLLLTWLSPEVSS. Disulfide bonds link Cys76-Cys87, Cys127-Cys135, Cys137-Cys157, Cys206-Cys220, Cys208-Cys215, Cys278-Cys309, Cys294-Cys304, Cys308-Cys348, Cys324-Cys339, Cys326-Cys336, and Cys331-Cys332. A lipid anchor (O-palmitoleoyl serine; by PORCN) is attached at Ser212. The N-linked (GlcNAc...) asparagine glycan is linked to Asn295.

Belongs to the Wnt family. In terms of processing, palmitoleoylation is required for efficient binding to frizzled receptors. Depalmitoleoylation leads to Wnt signaling pathway inhibition.

It is found in the secreted. Its subcellular location is the extracellular space. It localises to the extracellular matrix. Its function is as follows. Ligand for members of the frizzled family of seven transmembrane receptors. Probable developmental protein. May be a signaling molecule which affects the development of discrete regions of tissues. Is likely to signal over only few cell diameters. This chain is Protein Wnt-2 (WNT2), found in Rhinolophus ferrumequinum (Greater horseshoe bat).